Consider the following 146-residue polypeptide: Small ribosomal subunit protein uS5 (146 aa).

An S5 DRBM domain is found at 8–71 (FKEVVVNIGR…DDAFKNIIKV (64 aa)).

It belongs to the universal ribosomal protein uS5 family. Part of the 30S ribosomal subunit. Contacts proteins S4 and S8.

With S4 and S12 plays an important role in translational accuracy. In terms of biological role, located at the back of the 30S subunit body where it stabilizes the conformation of the head with respect to the body. This is Small ribosomal subunit protein uS5 from Wolinella succinogenes (strain ATCC 29543 / DSM 1740 / CCUG 13145 / JCM 31913 / LMG 7466 / NCTC 11488 / FDC 602W) (Vibrio succinogenes).